A 610-amino-acid polypeptide reads, in one-letter code: Putative protein tag-250 (610 aa).

Tudor domains lie at 149 to 260 and 386 to 506; these read VALK…LLPP and MPMS…KIGG.

The polypeptide is Putative protein tag-250 (tag-250) (Caenorhabditis elegans).